A 758-amino-acid chain; its full sequence is Spastin (758 aa).

The segment at 1–103 (MVRTKNQSSS…SPRSGHHHSY (103 aa)) is disordered. The Cytoplasmic portion of the chain corresponds to 1–121 (MVRTKNQSSS…KQNLYVVSFP (121 aa)). The interaction with atl stretch occupies residues 1-159 (MVRTKNQSSS…VIYRPHRRDC (159 aa)). Residues 1–210 (MVRTKNQSSS…RPIQPLEMAA (210 aa)) form a required for localization to punctate cytoplasmic foci region. 4 stretches are compositionally biased toward low complexity: residues 8-28 (SSSSSASSSSTKSPIKSSSGA), 43-58 (RSSSASNVAAVVAGGS), 66-76 (SSNRRSPGSSP), and 85-95 (TDDLTPTTCSP). The helical intramembrane region spans 122 to 142 (IIFLFNVLRSLIYQLFCIFRY). Over 143–758 (LYGASTKVIY…WSQDYGDITI (616 aa)) the chain is Cytoplasmic. 2 stretches are compositionally biased toward polar residues: residues 169-180 (SKEQQQSLNHPS) and 189-198 (QEQQLSNQPQ). Positions 169-202 (SKEQQQSLNHPSELNREGDGQEQQLSNQPQRFRP) are disordered. A sufficient for interaction with microtubules and microtubule severing region spans residues 208–758 (MAANRPGGGY…WSQDYGDITI (551 aa)). One can recognise an MIT domain in the interval 233 to 308 (HRRAFEYISK…SMARDRLHFL (76 aa)). The disordered stretch occupies residues 353–454 (RVRSSGYGPK…GPSGSGASTP (102 aa)). Composition is skewed to polar residues over residues 390–406 (NKSQTLPRNLGSKTSVG) and 425–454 (QFSSGRNTPPQRSRTPINNNGPSGSGASTP). The residue at position 439 (Thr439) is a Phosphothreonine. The interval 443 to 455 (NNGPSGSGASTPV) is required for interaction with microtubules. ATP is bound at residue 523–530 (GPPGNGKT).

Belongs to the AAA ATPase family. Spastin subfamily. Homohexamer. The homohexamer is stabilized by ATP-binding. The homohexamer may adopt a ring conformation through which microtubules pass prior to being severed. Interacts with microtubules. Interacts with atl; may be involved in microtubule dynamics.

It localises to the membrane. Its subcellular location is the cytoplasm. It is found in the cytoskeleton. The protein localises to the microtubule organizing center. The protein resides in the centrosome. It localises to the chromosome. Its subcellular location is the lipid droplet. It catalyses the reaction n ATP + n H2O + a microtubule = n ADP + n phosphate + (n+1) alpha/beta tubulin heterodimers.. ATP-dependent microtubule severing protein. Stimulates microtubule minus-end depolymerization and poleward microtubule flux in the mitotic spindle. Regulates microtubule stability in the neuromuscular junction synapse. Involved in lipid metabolism by regulating the size and distribution of lipid droplets. Involved in axon regeneration by regulating microtubule severing. This is Spastin from Drosophila melanogaster (Fruit fly).